Here is a 427-residue protein sequence, read N- to C-terminus: O-methyltransferase FrzF (427 aa).

Residue Asp281 participates in S-adenosyl-L-methionine binding. Residue His327 is the Proton acceptor of the active site.

It belongs to the class I-like SAM-binding methyltransferase superfamily. Cation-independent O-methyltransferase family. As to quaternary structure, homodimer.

The catalysed reaction is (1S,4S)-4-[(4-hydroxyphenyl)methyl]-2,5-diazaspiro[bicyclo[3.2.1]octane-6,1'-cyclohexan]-4'-one + S-adenosyl-L-methionine = (1S,4S)-4-[(4-methoxyphenyl)methyl]-2,5-diazaspiro[bicyclo[3.2.1]octane-6,1'-cyclohexan]-4'-one + S-adenosyl-L-homocysteine + H(+). The enzyme catalyses (1S,4S)-4-[(4-hydroxyphenyl)methyl]-2-methyl-2,5-diazaspiro[bicyclo[3.2.1]octane-6,1'-cyclohexan]-4'-one + S-adenosyl-L-methionine = (1S,4S)-4-[(4-methoxyphenyl)methyl]-2-methyl-2,5-diazaspiro[bicyclo[3.2.1]octane-6,1'-cyclohexan]-4'-one + S-adenosyl-L-homocysteine + H(+). It functions in the pathway secondary metabolite biosynthesis. In terms of biological role, O-methyltransferase; part of the gene cluster that mediates the biosynthesis of the alkaloid (-)-FR901483, a potent immunosuppressant that shows efficacy in animal models and a probable inhibitor of purine nucleotide biosynthesis by targeting phosphoribosylpyrophosphate amidotransferase (PPAT). Within the pathway, FrzF methylates the phenolic oxygen at position C4. The biosynthesis of (-)-FR901483 starts with the condensation of two L-tyrosines to yield (S,S)-dityrosyl-piperazine. This process occurs in 3 steps with the non-canonical nonribosomal peptide synthetase FrzA catalyzing the reduction of L-tyrosine into L-tyrosinal, the spontaneous condensation of 2 L-tyrosinal units, and the subsequent reduction by the NmrA-like family domain-containing oxidoreductase FrzB. The cytochrome P450 monooxygenase FrzC then performs coupling between N10 and C1' to morph the piperazine into a 1,4-diazabicyclo[3.2.1]octane spiro-fused to a 2,5-cyclohexadienone. The dienone portion is further reduced to cyclohexanone by the flavin-dependent reductase FrzD. The methyltranserases (MTs) FrzE and FrzF are then involved in the methylation at the C10' amine and the C4 phenolic oxygen, respectively. The order of the two MTs appear to be interchangeable. Cleavage of the C9-N10' bond by the dioxygenase FrzG then leads to formation of a conjugated iminium. In addition to the oxidation of C9, an additional dehydrogenation between C7 and C8 can occur to give a likely shunt product. The next biosynthetic step is the intramolecular aldol condensation catalyzed by the newly identified aldolase FrzH to yield an aza-tricyclic product with the formation of a C9-C3' bond. The short-chain dehydrogenase/reductase FrzI then produces dephospho-(-)-FR901483 that is phosphorylated at C4'-OH into (-)-FR901483 by the phosphotransferase FrzJ. The sequence is that of O-methyltransferase FrzF from Cladobotryum sp.